Consider the following 201-residue polypeptide: Adapter protein MecA 1 (201 aa).

This sequence belongs to the MecA family. As to quaternary structure, homodimer.

Functionally, enables the recognition and targeting of unfolded and aggregated proteins to the ClpC protease or to other proteins involved in proteolysis. Acts negatively in the development of competence by binding ComK and recruiting it to the ClpCP protease. When overexpressed, inhibits sporulation. Also involved in Spx degradation by ClpC. The sequence is that of Adapter protein MecA 1 (mecA1) from Halalkalibacterium halodurans (strain ATCC BAA-125 / DSM 18197 / FERM 7344 / JCM 9153 / C-125) (Bacillus halodurans).